A 159-amino-acid polypeptide reads, in one-letter code: MIRIGHGFDVHAFGEARPLIIGGVEVPYHTGFIAHSDGDVALHALTDALLGALALGDIGKLFPDTDMQFKNIDSRILLREAFRRVQEKGYKIGNVDVTIIAQAPKMRPHIDAMRAVIAEDLQCSVEQVNVKATTTEKLGFTGRSEGITTEAVALLVKSC.

2 residues coordinate a divalent metal cation: Asp9 and His11. 4-CDP-2-C-methyl-D-erythritol 2-phosphate-binding positions include 9–11 (DVH) and 35–36 (HS). Residue His43 coordinates a divalent metal cation. 4-CDP-2-C-methyl-D-erythritol 2-phosphate is bound by residues 57 to 59 (DIG), 62 to 66 (FPDTD), 133 to 136 (TTTE), Phe140, and Arg143.

It belongs to the IspF family. As to quaternary structure, homotrimer. It depends on a divalent metal cation as a cofactor.

The enzyme catalyses 4-CDP-2-C-methyl-D-erythritol 2-phosphate = 2-C-methyl-D-erythritol 2,4-cyclic diphosphate + CMP. It participates in isoprenoid biosynthesis; isopentenyl diphosphate biosynthesis via DXP pathway; isopentenyl diphosphate from 1-deoxy-D-xylulose 5-phosphate: step 4/6. Functionally, involved in the biosynthesis of isopentenyl diphosphate (IPP) and dimethylallyl diphosphate (DMAPP), two major building blocks of isoprenoid compounds. Catalyzes the conversion of 4-diphosphocytidyl-2-C-methyl-D-erythritol 2-phosphate (CDP-ME2P) to 2-C-methyl-D-erythritol 2,4-cyclodiphosphate (ME-CPP) with a corresponding release of cytidine 5-monophosphate (CMP). The chain is 2-C-methyl-D-erythritol 2,4-cyclodiphosphate synthase from Mannheimia succiniciproducens (strain KCTC 0769BP / MBEL55E).